We begin with the raw amino-acid sequence, 506 residues long: Cytochrome P450 monooxygenase tpcB (506 aa).

Cys450 contacts heme.

It belongs to the cytochrome P450 family. The cofactor is heme.

Its pathway is secondary metabolite biosynthesis; terpenoid biosynthesis. Its function is as follows. Cytochrome P450 monooxygenase; part of the gene cluster that mediates the biosynthesis of terpestacin. The bifunctional terpene synthase tpcA converts isopentenyl diphosphate (IPP) and dimethylallyl diphosphate (DMAPP) into the sesterterpene preterpestacin I. The C-terminal prenyltransferase (PT) domain of tpcA catalyzes formation of GFPP, whereas the N-terminal terpene cyclase (TC) domain catalyzes the cyclization of GFPP into preterpestacin I. The cytochrome P450 monooxygenase tpcB then hydroxylates preterpestacin I to yield 24-hydroxypreterpstacin I (renamed as preterpestacin II) whereas the cytochrome P450 monooxygenase tpcC further hydroxylates preterpestacin II to yield 16,17-dihydroxypreterpestacin II (renamed as preterpestacin III). Finally, the FAD-dependent monooxygenase tpcD converts preterpestacin III into terpestacin. This Cochliobolus heterostrophus (strain C5 / ATCC 48332 / race O) (Southern corn leaf blight fungus) protein is Cytochrome P450 monooxygenase tpcB.